The primary structure comprises 344 residues: Phenylalanine--tRNA ligase alpha subunit (344 aa).

Mg(2+) is bound at residue glutamate 256.

It belongs to the class-II aminoacyl-tRNA synthetase family. Phe-tRNA synthetase alpha subunit type 1 subfamily. In terms of assembly, tetramer of two alpha and two beta subunits. It depends on Mg(2+) as a cofactor.

The protein resides in the cytoplasm. The catalysed reaction is tRNA(Phe) + L-phenylalanine + ATP = L-phenylalanyl-tRNA(Phe) + AMP + diphosphate + H(+). The sequence is that of Phenylalanine--tRNA ligase alpha subunit from Bacillus pumilus (strain SAFR-032).